Consider the following 121-residue polypeptide: UPF0145 protein SGR_4080 (121 aa).

It belongs to the UPF0145 family.

The sequence is that of UPF0145 protein SGR_4080 from Streptomyces griseus subsp. griseus (strain JCM 4626 / CBS 651.72 / NBRC 13350 / KCC S-0626 / ISP 5235).